A 98-amino-acid chain; its full sequence is NADH-ubiquinone oxidoreductase chain 4L (98 aa).

The next 3 membrane-spanning stretches (helical) occupy residues 1-21, 26-46, and 59-79; these read MTHI…GLTF, LLSA…ALAM, and APLL…SLLV.

Belongs to the complex I subunit 4L family.

It localises to the mitochondrion membrane. It catalyses the reaction a ubiquinone + NADH + 5 H(+)(in) = a ubiquinol + NAD(+) + 4 H(+)(out). Core subunit of the mitochondrial membrane respiratory chain NADH dehydrogenase (Complex I) which catalyzes electron transfer from NADH through the respiratory chain, using ubiquinone as an electron acceptor. Part of the enzyme membrane arm which is embedded in the lipid bilayer and involved in proton translocation. The chain is NADH-ubiquinone oxidoreductase chain 4L (MT-ND4L) from Polypterus ornatipinnis (Ornate bichir).